The sequence spans 288 residues: Probable endonuclease 4 (288 aa).

Residues histidine 75, histidine 115, glutamate 153, aspartate 187, histidine 190, histidine 224, aspartate 237, histidine 239, and glutamate 269 each coordinate Zn(2+).

The protein belongs to the AP endonuclease 2 family. Zn(2+) is required as a cofactor.

The catalysed reaction is Endonucleolytic cleavage to 5'-phosphooligonucleotide end-products.. Functionally, endonuclease IV plays a role in DNA repair. It cleaves phosphodiester bonds at apurinic or apyrimidinic (AP) sites, generating a 3'-hydroxyl group and a 5'-terminal sugar phosphate. This is Probable endonuclease 4 from Chlamydia muridarum (strain MoPn / Nigg).